The chain runs to 122 residues: Mth938 domain-containing protein (122 aa).

The segment at 6–122 (IASLSWGQMK…RVGGVFHSTC (117 aa)) is MTH138-like domain.

This sequence belongs to the AAMDC family.

It localises to the cytoplasm. In terms of biological role, may play a role in preadipocyte differentiation and adipogenesis. In Bos taurus (Bovine), this protein is Mth938 domain-containing protein (AAMDC).